Here is an 85-residue protein sequence, read N- to C-terminus: Phosphocarrier protein HPr (85 aa).

The HPr domain maps to 1-85 (MFQKEIKINA…HLSKIMTELE (85 aa)). The active-site Pros-phosphohistidine intermediate is histidine 15.

This sequence belongs to the HPr family.

Its subcellular location is the cytoplasm. Functionally, general (non sugar-specific) component of the phosphoenolpyruvate-dependent sugar phosphotransferase system (sugar PTS). This major carbohydrate active-transport system catalyzes the phosphorylation of incoming sugar substrates concomitantly with their translocation across the cell membrane. The phosphoryl group from phosphoenolpyruvate (PEP) is transferred to the phosphoryl carrier protein HPr by enzyme I. Phospho-HPr then transfers it to the PTS EIIA domain. In Buchnera aphidicola subsp. Schizaphis graminum (strain Sg), this protein is Phosphocarrier protein HPr (ptsH).